The chain runs to 899 residues: Protein translocase subunit SecA (899 aa).

ATP is bound by residues Gln87, 105–109 (GEGKT), and Asp516. Residues Cys884, Cys886, Cys895, and His896 each coordinate Zn(2+).

The protein belongs to the SecA family. Monomer and homodimer. Part of the essential Sec protein translocation apparatus which comprises SecA, SecYEG and auxiliary proteins SecDF. Other proteins may also be involved. Zn(2+) is required as a cofactor.

Its subcellular location is the cell inner membrane. The protein localises to the cytoplasm. It catalyses the reaction ATP + H2O + cellular proteinSide 1 = ADP + phosphate + cellular proteinSide 2.. Its function is as follows. Part of the Sec protein translocase complex. Interacts with the SecYEG preprotein conducting channel. Has a central role in coupling the hydrolysis of ATP to the transfer of proteins into and across the cell membrane, serving as an ATP-driven molecular motor driving the stepwise translocation of polypeptide chains across the membrane. The protein is Protein translocase subunit SecA of Borreliella burgdorferi (strain ATCC 35210 / DSM 4680 / CIP 102532 / B31) (Borrelia burgdorferi).